We begin with the raw amino-acid sequence, 238 residues long: Partner of Y14 and mago (238 aa).

Residues 1-183 (MTTYATDSQG…GADGHSDLSK (183 aa)) form a disordered region. Basic and acidic residues-rich tracts occupy residues 65–77 (QKAR…EQRK) and 123–133 (LEQKQKEEQKA). Residues 136 to 155 (RQQAQDQRNSKQQQSQNQSK) show a composition bias toward low complexity. The stretch at 176 to 233 (DGHSDLSKKLRKLRKKIREIEVIEERLRASDGPRPDKDQIEKAKRKAEILKEIEELER) forms a coiled coil.

The protein belongs to the pym family. In terms of assembly, interacts (via N-terminus) with mago and tsu/Y14; the interaction is direct.

The protein localises to the cytoplasm. It is found in the nucleus. Functionally, regulator of the exon junction complex (EJC), a multiprotein complex that associates immediately upstream of the exon-exon junction on mRNAs and serves as a positional landmarks for the intron exon structure of genes and directs post-transcriptional processes in the cytoplasm such as mRNA export, nonsense-mediated mRNA decay (NMD) or translation. This Culex quinquefasciatus (Southern house mosquito) protein is Partner of Y14 and mago.